Reading from the N-terminus, the 188-residue chain is dCTP deaminase (188 aa).

Lys109 to Arg114 provides a ligand contact to dCTP. The active-site Proton donor/acceptor is the Glu135. DCTP contacts are provided by Gln154, Tyr168, and Gln178.

It belongs to the dCTP deaminase family. As to quaternary structure, homotrimer.

The enzyme catalyses dCTP + H2O + H(+) = dUTP + NH4(+). The protein operates within pyrimidine metabolism; dUMP biosynthesis; dUMP from dCTP (dUTP route): step 1/2. Its function is as follows. Catalyzes the deamination of dCTP to dUTP. The polypeptide is dCTP deaminase (Helicobacter pylori (strain Shi470)).